Here is a 515-residue protein sequence, read N- to C-terminus: Endoglucanase 2 (515 aa).

The first 31 residues, 1–31 (MVAKPRSRCCCCSVFIGVIILIAIIIAVIFT), serve as a signal peptide directing secretion. Asparagine 37 carries N-linked (GlcNAc...) asparagine glycosylation. Aspartate 100 acts as the Nucleophile in catalysis. An N-linked (GlcNAc...) asparagine glycan is attached at asparagine 250. Residue histidine 433 is part of the active site. Residue asparagine 475 is glycosylated (N-linked (GlcNAc...) asparagine). Residue aspartate 480 is part of the active site. Asparagine 483 is a glycosylation site (N-linked (GlcNAc...) asparagine). The active site involves glutamate 489.

Belongs to the glycosyl hydrolase 9 (cellulase E) family.

The protein localises to the secreted. The enzyme catalyses Endohydrolysis of (1-&gt;4)-beta-D-glucosidic linkages in cellulose, lichenin and cereal beta-D-glucans.. This chain is Endoglucanase 2, found in Arabidopsis thaliana (Mouse-ear cress).